The chain runs to 71 residues: Putative membrane protein insertion efficiency factor (71 aa).

It belongs to the UPF0161 family.

The protein resides in the cell membrane. In terms of biological role, could be involved in insertion of integral membrane proteins into the membrane. This chain is Putative membrane protein insertion efficiency factor, found in Acetivibrio thermocellus (strain ATCC 27405 / DSM 1237 / JCM 9322 / NBRC 103400 / NCIMB 10682 / NRRL B-4536 / VPI 7372) (Clostridium thermocellum).